The following is a 250-amino-acid chain: Glycerol-1-phosphate phosphohydrolase 1 (250 aa).

Asp18 serves as the catalytic Nucleophile. The Mg(2+) site is built by Asp18 and Asp20. The Proton donor role is filled by Asp20. Lys64 is covalently cross-linked (Glycyl lysine isopeptide (Lys-Gly) (interchain with G-Cter in SUMO); alternate). Lys64 participates in a covalent cross-link: Glycyl lysine isopeptide (Lys-Gly) (interchain with G-Cter in ubiquitin); alternate. Ser90 bears the Phosphoserine mark. Lys144 is covalently cross-linked (Glycyl lysine isopeptide (Lys-Gly) (interchain with G-Cter in ubiquitin)). Residue Asp179 participates in Mg(2+) binding.

This sequence belongs to the HAD-like hydrolase superfamily. DOG/GPP family. In terms of assembly, monomer. Requires Mg(2+) as cofactor.

The protein resides in the cytoplasm. It localises to the nucleus. The catalysed reaction is sn-glycerol 1-phosphate + H2O = glycerol + phosphate. It catalyses the reaction sn-glycerol 3-phosphate + H2O = glycerol + phosphate. Major isoform of glycerol-1-phosphate phosphohydrolase involved in glycerol biosynthesis. Plays a role in osmoadaptation and required for adaptation to anaerobic conditions. The protein is Glycerol-1-phosphate phosphohydrolase 1 of Saccharomyces cerevisiae (strain ATCC 204508 / S288c) (Baker's yeast).